The primary structure comprises 205 residues: MIELRTYVFLDSLQPQLASYMATASMGFLPVPGDSSLWIEVAPGMAVHRLSDIALKASNVRLGQQIVERAYGSMVIHHRDQSDVLEAGQRILDHLQTREYDRQQCVVMWNEIIRGVTADHATLINRDNRKGSMILPGQSMFIMETEPAGYIIYAANEAEKAADVTLVEARAVGAYGRLVMCGKEGDITEAARAANEALKRLTCRS.

2 BMC circularly permuted domains span residues 3–100 (ELRT…TREY) and 106–205 (VVMW…TCRS). Positions 68–69 (ER) match the Gates the pore motif.

This sequence belongs to the EutL/PduB family. In terms of assembly, homotrimer. Forms a dimer of stacked trimers, the same faces interact. Probably forms a CsoS1-CsoS1D-CsoS2 complex.

The protein localises to the carboxysome. Its function is as follows. Part of the carboxysome shell, a polyhedral inclusion where RuBisCO (ribulose bisphosphate carboxylase, cbbL-cbbS) is sequestered. It may control transport of RuBisCO reactants in and out of the carboxysome. The sequence is that of Carboxysome shell protein CsoS1D from Hydrogenovibrio crunogenus (strain DSM 25203 / XCL-2) (Thiomicrospira crunogena).